The chain runs to 770 residues: Glutamate carboxypeptidase 2 homolog (770 aa).

At 1–19 (MPYVGVGAQKASTNLTGGP) the chain is on the cytoplasmic side. The helical; Signal-anchor for type II membrane protein transmembrane segment at 20-40 (MMKAYAFVLAFFLLGLGVLAL) threads the bilayer. Residues 41 to 770 (GKHHSGRRFN…CVVNTLRDVI (730 aa)) lie on the Extracellular side of the membrane. 2 N-linked (GlcNAc...) asparagine glycosylation sites follow: Asn175 and Asn337. A catalytic region spans residues 282 to 597 (SKKELFKGRT…QYWAELAKTF (316 aa)). Residues His387 and Asp397 each coordinate Zn(2+). An N-linked (GlcNAc...) asparagine glycan is attached at Asn417. Glu435 acts as the Nucleophile in catalysis. The Zn(2+) site is built by Glu436 and Asp464. N-linked (GlcNAc...) asparagine glycosylation is found at Asn469 and Asn551. Zn(2+) is bound at residue His562. 2 N-linked (GlcNAc...) asparagine glycosylation sites follow: Asn606 and Asn630.

Belongs to the peptidase M28 family. M28B subfamily. Requires Zn(2+) as cofactor.

It localises to the membrane. The enzyme catalyses Release of an unsubstituted, C-terminal glutamyl residue, typically from Ac-Asp-Glu or folylpoly-gamma-glutamates.. The sequence is that of Glutamate carboxypeptidase 2 homolog from Caenorhabditis briggsae.